A 391-amino-acid polypeptide reads, in one-letter code: Erythronate-4-phosphate dehydrogenase (391 aa).

Substrate contacts are provided by Ser-45 and Thr-67. NAD(+) is bound by residues Asp-147 and Thr-176. Arg-209 is an active-site residue. An NAD(+)-binding site is contributed by Asp-238. Glu-243 is an active-site residue. The active-site Proton donor is the His-260. Residue Gly-263 coordinates NAD(+). Tyr-264 is a binding site for substrate.

Belongs to the D-isomer specific 2-hydroxyacid dehydrogenase family. PdxB subfamily. In terms of assembly, homodimer.

The protein localises to the cytoplasm. It catalyses the reaction 4-phospho-D-erythronate + NAD(+) = (R)-3-hydroxy-2-oxo-4-phosphooxybutanoate + NADH + H(+). The protein operates within cofactor biosynthesis; pyridoxine 5'-phosphate biosynthesis; pyridoxine 5'-phosphate from D-erythrose 4-phosphate: step 2/5. Functionally, catalyzes the oxidation of erythronate-4-phosphate to 3-hydroxy-2-oxo-4-phosphonooxybutanoate. This Photobacterium profundum (strain SS9) protein is Erythronate-4-phosphate dehydrogenase.